A 122-amino-acid chain; its full sequence is MIKKEDRKFKRIKRHLRIRKKVFGTSERPRLSVFRSEKHIYAQIIDDTKGHTLVSASTLDPDLRARIAKTYNKEAAKEVGKLVAQKALSKGISQVVFDRGGFKFHGRIRELADAAREAGLKF.

The protein belongs to the universal ribosomal protein uL18 family. In terms of assembly, part of the 50S ribosomal subunit; part of the 5S rRNA/L5/L18/L25 subcomplex. Contacts the 5S and 23S rRNAs.

Its function is as follows. This is one of the proteins that bind and probably mediate the attachment of the 5S RNA into the large ribosomal subunit, where it forms part of the central protuberance. This Pseudothermotoga lettingae (strain ATCC BAA-301 / DSM 14385 / NBRC 107922 / TMO) (Thermotoga lettingae) protein is Large ribosomal subunit protein uL18.